A 251-amino-acid chain; its full sequence is NADPH-dependent oxidoreductase (251 aa).

It belongs to the flavin oxidoreductase frp family. The cofactor is FMN.

Its function is as follows. Reduces FMN, organic nitro compounds and disulfide DTNB. Involved in maintenance of the cellular redox state and the disulfide stress response. This chain is NADPH-dependent oxidoreductase (nfrA), found in Staphylococcus aureus (strain MRSA252).